The sequence spans 552 residues: uncharacterized protein (552 aa).

In terms of domain architecture, DhaL spans 8-200; that stretch reads KLFAEMIIQG…LAIVYAGFLK (193 aa).

This is an uncharacterized protein from Staphylococcus saprophyticus subsp. saprophyticus (strain ATCC 15305 / DSM 20229 / NCIMB 8711 / NCTC 7292 / S-41).